We begin with the raw amino-acid sequence, 447 residues long: UDP-N-acetyl-alpha-D-muramoyl-L-alanyl-L-glutamate epimerase (447 aa).

It belongs to the MurL family.

The catalysed reaction is UDP-N-acetyl-alpha-D-muramoyl-L-alanyl-L-glutamate + ATP + H2O = UDP-N-acetyl-alpha-D-muramoyl-L-alanyl-D-glutamate + AMP + diphosphate + H(+). The protein operates within cell wall biogenesis; peptidoglycan biosynthesis. Functionally, cell wall formation. Catalyzes epimerization of the terminal L-glutamate in UDP-N-acetyl-alpha-D-muramoyl-L-alanyl-L-glutamate. This Micromonospora sp. (strain ATCC 39149 / NRRL 15099 / SCC 1413) protein is UDP-N-acetyl-alpha-D-muramoyl-L-alanyl-L-glutamate epimerase.